A 293-amino-acid polypeptide reads, in one-letter code: MRNFIIHILTGLSGSGKSTALDVFEDAGFYCVDNMPVALLPKFLEIPVNTASGISGLAFVMDLREPDFLATYPSVFNDLKAQGYRLTVLFFEAGENVLIQRYSQTRRHHPLAGDKGLVSGIRRERELLEELRASSDTVIDTSTLTIHELKIRLLARIRKSADHMPMRIHVMSFGYKYGIPHDADIIMDVRFLPNPYFVDPLKHKNGTDADVAAHVLNHSTGSAFLEKFLNLIDFLLPLYKNEPKAYLTVAVGCTGGCHRSVAVATAVFNHMKKREERHVEISHRDLKEAGQTT.

Residue 11 to 18 (GLSGSGKS) coordinates ATP. 62-65 (DLRE) contacts GTP.

It belongs to the RapZ-like family.

In terms of biological role, displays ATPase and GTPase activities. The chain is Nucleotide-binding protein Dole_0503 from Desulfosudis oleivorans (strain DSM 6200 / JCM 39069 / Hxd3) (Desulfococcus oleovorans).